A 776-amino-acid chain; its full sequence is Endonuclease MutS2 (776 aa).

330 to 337 (GPNTGGKT) provides a ligand contact to ATP. Residues 701–776 (LDLRGMRYEE…GSGATIAILK (76 aa)) enclose the Smr domain.

This sequence belongs to the DNA mismatch repair MutS family. MutS2 subfamily. In terms of assembly, homodimer. Binds to stalled ribosomes, contacting rRNA.

Functionally, endonuclease that is involved in the suppression of homologous recombination and thus may have a key role in the control of bacterial genetic diversity. In terms of biological role, acts as a ribosome collision sensor, splitting the ribosome into its 2 subunits. Detects stalled/collided 70S ribosomes which it binds and splits by an ATP-hydrolysis driven conformational change. Acts upstream of the ribosome quality control system (RQC), a ribosome-associated complex that mediates the extraction of incompletely synthesized nascent chains from stalled ribosomes and their subsequent degradation. Probably generates substrates for RQC. The protein is Endonuclease MutS2 of Lactococcus lactis subsp. lactis (strain IL1403) (Streptococcus lactis).